A 92-amino-acid polypeptide reads, in one-letter code: Small ribosomal subunit protein bS18 (92 aa).

Belongs to the bacterial ribosomal protein bS18 family. In terms of assembly, part of the 30S ribosomal subunit. Forms a tight heterodimer with protein bS6.

Functionally, binds as a heterodimer with protein bS6 to the central domain of the 16S rRNA, where it helps stabilize the platform of the 30S subunit. The protein is Small ribosomal subunit protein bS18 of Cupriavidus taiwanensis (strain DSM 17343 / BCRC 17206 / CCUG 44338 / CIP 107171 / LMG 19424 / R1) (Ralstonia taiwanensis (strain LMG 19424)).